Here is a 2241-residue protein sequence, read N- to C-terminus: Large tegument protein deneddylase (2241 aa).

The segment at 1-238 is deubiquitination activity; the sequence is MKVTQASCHQ…IDLTGVVRES (238 aa). A Peptidase C76 domain is found at 4–226; it reads TQASCHQGDI…AARLVSTYRD (223 aa). Residues Cys24, Asp160, and His162 contribute to the active site. Positions 239 to 314 are disordered; it reads ADTAATTTTA…STTSKTLATA (76 aa). The span at 240–250 shows a compositional bias: low complexity; the sequence is DTAATTTTAAP. The span at 251–268 shows a compositional bias: pro residues; sequence SLPPLPDPIVDPGCPPGV. The span at 304 to 314 shows a compositional bias: low complexity; sequence PSTTSKTLATA. Residues 327–331 form an interaction with inner tegument protein region; it reads SSAVP. Disordered regions lie at residues 1187–1230 and 2118–2152; these read MTET…PPAD and PIARVQQPPRRHRHRAAAAADDDGQIDHAQDDTSR. Composition is skewed to basic and acidic residues over residues 1190 to 1199 and 2142 to 2152; these read TSERLDRSLR and QIDHAQDDTSR.

It belongs to the herpesviridae large tegument protein family. In terms of assembly, interacts with host CUL1 and CUL4A; these interactions inhibit the E3 ligase activity of cullins. Interacts with inner tegument protein. Interacts with capsid vertex specific component CVC2. Interacts with the major capsid protein/MCP.

The protein resides in the virion tegument. The protein localises to the host cytoplasm. It is found in the host nucleus. It carries out the reaction Thiol-dependent hydrolysis of ester, thioester, amide, peptide and isopeptide bonds formed by the C-terminal Gly of ubiquitin (a 76-residue protein attached to proteins as an intracellular targeting signal).. Functionally, large tegument protein that plays multiple roles in the viral cycle. During viral entry, remains associated with the capsid while most of the tegument is detached and participates in the capsid transport toward the host nucleus. Plays a role in the routing of the capsid at the nuclear pore complex and subsequent uncoating. Within the host nucleus, acts as a deneddylase and promotes the degradation of nuclear CRLs (cullin-RING ubiquitin ligases) and thereby stabilizes nuclear CRL substrates, while cytoplasmic CRLs remain unaffected. These modifications prevent host cell cycle S-phase progression and create a favorable environment allowing efficient viral genome replication. Participates later in the secondary envelopment of capsids. Indeed, plays a linker role for the association of the outer viral tegument to the capsids together with the inner tegument protein. The protein is Large tegument protein deneddylase (UL48) of Homo sapiens (Human).